A 75-amino-acid chain; its full sequence is Stewaprin-a (75 aa).

The first 24 residues, 1–24, serve as a signal peptide directing secretion; sequence MSSGGLLLLLGLLTLWAELIPVSG. Residues 27-72 enclose the WAP domain; that stretch reads HPKKPGLCPPRPQKPPCVRECKNDWSCPGEQKCCRYGCIFECRDPI. 4 disulfides stabilise this stretch: Cys34–Cys60, Cys43–Cys64, Cys47–Cys59, and Cys53–Cys68.

It belongs to the venom waprin family. Expressed by the venom gland.

It is found in the secreted. Functionally, damages membranes of susceptible bacteria. Has no hemolytic activity. Not toxic to mice. Does not inhibit the proteinases elastase and cathepsin G. In Hoplocephalus stephensii (Stephens's banded snake), this protein is Stewaprin-a.